The primary structure comprises 943 residues: Translation initiation factor IF-2 (943 aa).

The disordered stretch occupies residues 35–359; sequence MSSIDQDQEA…MPQRKERPLP (325 aa). A compositionally biased stretch (low complexity) spans 57-76; the sequence is KAPSSQAAKTPAKAAKTSSA. Composition is skewed to basic and acidic residues over residues 92–103 and 110–124; these read SNDHADAAEHSQ and AKQE…KTSD. A compositionally biased stretch (polar residues) spans 130–141; it reads SKSTILRPRSTQ. Over residues 142–190 the composition is skewed to low complexity; that stretch reads TAHTNTNHNRGGNTASANNTANGRNSNRSNNNNNNRSANNANRSGNNNR. Composition is skewed to basic and acidic residues over residues 191–205, 239–250, and 259–271; these read SNER…RFDN, ASERQQPKRQEA, and KRSE…RPRT. 2 stretches are compositionally biased toward low complexity: residues 289–299 and 315–330; these read PAAAAPKPASA and NFGR…GFNR. Over residues 331–342 the composition is skewed to basic residues; sequence NNRRNKKNKRRQ. Basic and acidic residues predominate over residues 346–358; the sequence is PKKEMPQRKERPL. One can recognise a tr-type G domain in the interval 444–613; the sequence is PRPPVVTIMG…LLEADVLELK (170 aa). The tract at residues 453 to 460 is G1; that stretch reads GHVDHGKT. 453 to 460 is a GTP binding site; sequence GHVDHGKT. Residues 478–482 are G2; the sequence is GITQH. Positions 499–502 are G3; that stretch reads DTPG. GTP-binding positions include 499-503 and 553-556; these read DTPGH and NKID. Residues 553-556 form a G4 region; that stretch reads NKID. The G5 stretch occupies residues 589-591; it reads SAK.

It belongs to the TRAFAC class translation factor GTPase superfamily. Classic translation factor GTPase family. IF-2 subfamily.

It is found in the cytoplasm. One of the essential components for the initiation of protein synthesis. Protects formylmethionyl-tRNA from spontaneous hydrolysis and promotes its binding to the 30S ribosomal subunits. Also involved in the hydrolysis of GTP during the formation of the 70S ribosomal complex. The polypeptide is Translation initiation factor IF-2 (Lacticaseibacillus paracasei (strain ATCC 334 / BCRC 17002 / CCUG 31169 / CIP 107868 / KCTC 3260 / NRRL B-441) (Lactobacillus paracasei)).